The chain runs to 427 residues: Intermediate conductance calcium-activated potassium channel protein 4 (427 aa).

The chain crosses the membrane as a helical span at residues alanine 29–phenylalanine 49. A helical membrane pass occupies residues phenylalanine 59 to phenylalanine 79. The chain crosses the membrane as a helical span at residues isoleucine 108–valine 128. The chain crosses the membrane as a helical span at residues glycine 143 to valine 163. A helical membrane pass occupies residues leucine 207 to glutamate 227. Positions leucine 241 to methionine 261 form an intramembrane region, pore-forming. The chain crosses the membrane as a helical span at residues isoleucine 265–valine 285. A calmodulin-binding region spans residues alanine 286–alanine 347. Phosphohistidine is present on histidine 358.

Belongs to the potassium channel KCNN family. KCa3.1/KCNN4 subfamily. As to quaternary structure, homodimer. Homotetramer. Heterotetramer of potassium channel proteins. Interacts with MTMR6; this interaction leads to selective dephosphorylation of PI(3)P in a lipid microdomain adjacent to KCNN4, resulting in a decrease of intermediate conductance calcium-activated potassium channel activity. Interacts (via the C-tail domain) with CALM1; the calmodulin binding is constitutive, does not require calcium and mediates calcium-dependent gating and four calmodulin molecules bind to one channel tetramer. Phosphorylation at His-358 by NDKB activates the intermediate conductance calcium-activated potassium channel activity, and conversely it's dephosphorylation by PHPT1 inhibits this activity. As to expression, widely expressed in non-excitable tissues.

It is found in the cell membrane. The protein localises to the cell projection. It localises to the ruffle membrane. The catalysed reaction is K(+)(in) = K(+)(out). Its activity is regulated as follows. The channel is inhibited by clotrimazole and charybdotoxin but is insensitive to apamin. Intermediate conductance calcium-activated potassium channel that mediates the voltage-independent transmembrane transfer of potassium across the cell membrane through a constitutive interaction with calmodulin which binds the intracellular calcium allowing its opening. The current is characterized by a voltage-independent activation, an intracellular calcium concentration increase-dependent activation and a single-channel conductance of about 25 picosiemens. Also presents an inwardly rectifying current, thus reducing its already small outward conductance of potassium ions, which is particularly the case when the membrane potential displays positive values, above + 20 mV. Controls calcium influx during vascular contractility by being responsible of membrane hyperpolarization induced by vasoactive factors in proliferative vascular smooth muscle cell types. Following calcium influx, the consecutive activation of KCNN4 channel leads to a hyperpolarization of the cell membrane potential and hence an increase of the electrical driving force for further calcium influx promoting sustained calcium entry in response to stimulation with chemotactic peptides. Required for maximal calcium influx and proliferation during the reactivation of naive T-cells. Plays a role in the late stages of EGF-induced macropinocytosis through activation by PI(3)P. The protein is Intermediate conductance calcium-activated potassium channel protein 4 of Homo sapiens (Human).